The primary structure comprises 458 residues: Bifunctional protein GlmU (458 aa).

A pyrophosphorylase region spans residues 1–230; that stretch reads MENRYAIILA…FDEAMGVNDR (230 aa). Residues 9–12, lysine 23, glutamine 73, and 78–79 each bind UDP-N-acetyl-alpha-D-glucosamine; these read LAAG and GT. Aspartate 103 contributes to the Mg(2+) binding site. Glycine 140, glutamate 155, asparagine 170, and asparagine 228 together coordinate UDP-N-acetyl-alpha-D-glucosamine. Mg(2+) is bound at residue asparagine 228. A linker region spans residues 231-251; the sequence is VALSTANKIMHRRLNEMHMRN. The segment at 252-458 is N-acetyltransferase; it reads GVTFIDPDTT…YAKKLPYMKD (207 aa). Positions 333 and 351 each coordinate UDP-N-acetyl-alpha-D-glucosamine. Residue histidine 363 is the Proton acceptor of the active site. UDP-N-acetyl-alpha-D-glucosamine is bound by residues tyrosine 366 and asparagine 377. Acetyl-CoA-binding positions include 386–387, serine 405, alanine 423, and arginine 440; that span reads NY.

The protein in the N-terminal section; belongs to the N-acetylglucosamine-1-phosphate uridyltransferase family. This sequence in the C-terminal section; belongs to the transferase hexapeptide repeat family. In terms of assembly, homotrimer. The cofactor is Mg(2+).

The protein localises to the cytoplasm. It catalyses the reaction alpha-D-glucosamine 1-phosphate + acetyl-CoA = N-acetyl-alpha-D-glucosamine 1-phosphate + CoA + H(+). It carries out the reaction N-acetyl-alpha-D-glucosamine 1-phosphate + UTP + H(+) = UDP-N-acetyl-alpha-D-glucosamine + diphosphate. The protein operates within nucleotide-sugar biosynthesis; UDP-N-acetyl-alpha-D-glucosamine biosynthesis; N-acetyl-alpha-D-glucosamine 1-phosphate from alpha-D-glucosamine 6-phosphate (route II): step 2/2. Its pathway is nucleotide-sugar biosynthesis; UDP-N-acetyl-alpha-D-glucosamine biosynthesis; UDP-N-acetyl-alpha-D-glucosamine from N-acetyl-alpha-D-glucosamine 1-phosphate: step 1/1. It participates in bacterial outer membrane biogenesis; LPS lipid A biosynthesis. Its function is as follows. Catalyzes the last two sequential reactions in the de novo biosynthetic pathway for UDP-N-acetylglucosamine (UDP-GlcNAc). The C-terminal domain catalyzes the transfer of acetyl group from acetyl coenzyme A to glucosamine-1-phosphate (GlcN-1-P) to produce N-acetylglucosamine-1-phosphate (GlcNAc-1-P), which is converted into UDP-GlcNAc by the transfer of uridine 5-monophosphate (from uridine 5-triphosphate), a reaction catalyzed by the N-terminal domain. The chain is Bifunctional protein GlmU from Enterococcus faecalis (strain ATCC 700802 / V583).